The following is a 402-amino-acid chain: Propionate kinase (402 aa).

Positions 11 and 18 each coordinate ATP. Asn-11 provides a ligand contact to Mg(2+). Arg-86 contributes to the substrate binding site. Catalysis depends on Asp-143, which acts as the Proton donor/acceptor. Residues His-175, 203-207, 278-280, and 326-330 contribute to the ATP site; these read HLGNG, DLR, and GIGEN.

This sequence belongs to the acetokinase family. TdcD subfamily. In terms of assembly, homodimer. Requires Mg(2+) as cofactor.

The catalysed reaction is propanoate + ATP = propanoyl phosphate + ADP. It participates in amino-acid degradation; L-threonine degradation via propanoate pathway; propanoate from L-threonine: step 4/4. Functionally, catalyzes the conversion of propionyl phosphate and ADP to propionate and ATP. The chain is Propionate kinase from Salmonella agona (strain SL483).